The sequence spans 293 residues: Dehydrodolichyl diphosphate synthase complex subunit NUS1 (293 aa).

Transmembrane regions (helical) follow at residues 1–23 (MTGL…RTLT), 35–56 (WIWR…GFTL), and 117–135 (IASL…ISVY). N-linked (GlcNAc...) asparagine glycosylation is found at N144 and N271. An RXG motif; crucial for prenyltransferase activity motif is present at residues 290 to 292 (RLG). Residues L291 and G292 each contribute to the isopentenyl diphosphate site.

It belongs to the UPP synthase family. In terms of assembly, the active dehydrodolichyl diphosphate synthase complex is a heterotetramer composed of a dimer of heterodimer of DHDDS and NUS1. Interacts with NPC2. Mg(2+) serves as cofactor.

It is found in the endoplasmic reticulum membrane. The enzyme catalyses n isopentenyl diphosphate + (2E,6E)-farnesyl diphosphate = a di-trans,poly-cis-polyprenyl diphosphate + n diphosphate. Its pathway is protein modification; protein glycosylation. It participates in lipid metabolism. Activated by phospholipids including cardiolipin, phosphatidylcholine, phosphatidylethanolamine, phosphatidylinositol and phosphatidylserine. In terms of biological role, with DHDDS, forms the dehydrodolichyl diphosphate synthase (DDS) complex, an essential component of the dolichol monophosphate (Dol-P) biosynthetic machinery. Both subunits contribute to enzymatic activity, i.e. condensation of multiple copies of isopentenyl pyrophosphate (IPP) to farnesyl pyrophosphate (FPP) to produce dehydrodolichyl diphosphate (Dedol-PP), a precursor of dolichol phosphate which is utilized as a sugar carrier in protein glycosylation in the endoplasmic reticulum (ER). Synthesizes long-chain polyprenols, mostly of C95 and C100 chain length. Regulates the glycosylation and stability of nascent NPC2, thereby promoting trafficking of LDL-derived cholesterol. Acts as a specific receptor for the N-terminus of Nogo-B, a neural and cardiovascular regulator. This chain is Dehydrodolichyl diphosphate synthase complex subunit NUS1, found in Homo sapiens (Human).